The primary structure comprises 296 residues: Tyrosine recombinase XerC (296 aa).

Residues 2–85 (ADQASWLERF…ALKQFGQFLL (84 aa)) form the Core-binding (CB) domain. The Tyr recombinase domain maps to 106 to 285 (TLPKNLDPDS…DFQHLAKVYD (180 aa)). Residues Arg145, Lys169, His237, Arg240, and His263 contribute to the active site. The active-site O-(3'-phospho-DNA)-tyrosine intermediate is Tyr272.

Belongs to the 'phage' integrase family. XerC subfamily. Forms a cyclic heterotetrameric complex composed of two molecules of XerC and two molecules of XerD.

It localises to the cytoplasm. In terms of biological role, site-specific tyrosine recombinase, which acts by catalyzing the cutting and rejoining of the recombining DNA molecules. The XerC-XerD complex is essential to convert dimers of the bacterial chromosome into monomers to permit their segregation at cell division. It also contributes to the segregational stability of plasmids. This Shewanella amazonensis (strain ATCC BAA-1098 / SB2B) protein is Tyrosine recombinase XerC.